The following is a 493-amino-acid chain: Amidophosphoribosyltransferase (493 aa).

Residues 1–26 (MIPTQPLTADLDCDLGLERPDRPEEA) constitute a propeptide that is removed on maturation. The Nucleophile role is filled by C27. Residues 27–252 (CGVFALYAPG…PGEMVRITDA (226 aa)) form the Glutamine amidotransferase type-2 domain. Residue C268 coordinates [4Fe-4S] cluster. Residues S315, D377, and D378 each coordinate Mg(2+). Residues C414, C465, and C468 each contribute to the [4Fe-4S] cluster site.

It in the C-terminal section; belongs to the purine/pyrimidine phosphoribosyltransferase family. It depends on Mg(2+) as a cofactor. The cofactor is [4Fe-4S] cluster.

It carries out the reaction 5-phospho-beta-D-ribosylamine + L-glutamate + diphosphate = 5-phospho-alpha-D-ribose 1-diphosphate + L-glutamine + H2O. The protein operates within purine metabolism; IMP biosynthesis via de novo pathway; N(1)-(5-phospho-D-ribosyl)glycinamide from 5-phospho-alpha-D-ribose 1-diphosphate: step 1/2. Its function is as follows. Catalyzes the formation of phosphoribosylamine from phosphoribosylpyrophosphate (PRPP) and glutamine. This chain is Amidophosphoribosyltransferase, found in Synechococcus elongatus (strain ATCC 33912 / PCC 7942 / FACHB-805) (Anacystis nidulans R2).